The sequence spans 313 residues: Holliday junction branch migration complex subunit RuvB (313 aa).

Residues 1 to 157 are large ATPase domain (RuvB-L); the sequence is MNEYIGQGNI…FGLIMELDFY (157 aa). Residues Gly38, Lys41, Thr42, Thr43, 104-106, Arg147, Tyr157, and Arg194 contribute to the ATP site; that span reads EDF. Thr42 is a binding site for Mg(2+). The small ATPAse domain (RuvB-S) stretch occupies residues 158 to 228; it reads SIDELSKIIE…MVEEIMFLLG (71 aa). Residues 231–313 form a head domain (RuvB-H) region; sequence KEGLDELDRK…KVQRGLFDEE (83 aa). The DNA site is built by Arg286 and Arg291.

Belongs to the RuvB family. Homohexamer. Forms an RuvA(8)-RuvB(12)-Holliday junction (HJ) complex. HJ DNA is sandwiched between 2 RuvA tetramers; dsDNA enters through RuvA and exits via RuvB. An RuvB hexamer assembles on each DNA strand where it exits the tetramer. Each RuvB hexamer is contacted by two RuvA subunits (via domain III) on 2 adjacent RuvB subunits; this complex drives branch migration. In the full resolvosome a probable DNA-RuvA(4)-RuvB(12)-RuvC(2) complex forms which resolves the HJ.

The protein resides in the cytoplasm. The enzyme catalyses ATP + H2O = ADP + phosphate + H(+). Its function is as follows. The RuvA-RuvB-RuvC complex processes Holliday junction (HJ) DNA during genetic recombination and DNA repair, while the RuvA-RuvB complex plays an important role in the rescue of blocked DNA replication forks via replication fork reversal (RFR). RuvA specifically binds to HJ cruciform DNA, conferring on it an open structure. The RuvB hexamer acts as an ATP-dependent pump, pulling dsDNA into and through the RuvAB complex. RuvB forms 2 homohexamers on either side of HJ DNA bound by 1 or 2 RuvA tetramers; 4 subunits per hexamer contact DNA at a time. Coordinated motions by a converter formed by DNA-disengaged RuvB subunits stimulates ATP hydrolysis and nucleotide exchange. Immobilization of the converter enables RuvB to convert the ATP-contained energy into a lever motion, pulling 2 nucleotides of DNA out of the RuvA tetramer per ATP hydrolyzed, thus driving DNA branch migration. The RuvB motors rotate together with the DNA substrate, which together with the progressing nucleotide cycle form the mechanistic basis for DNA recombination by continuous HJ branch migration. Branch migration allows RuvC to scan DNA until it finds its consensus sequence, where it cleaves and resolves cruciform DNA. In Thermosipho melanesiensis (strain DSM 12029 / CIP 104789 / BI429), this protein is Holliday junction branch migration complex subunit RuvB.